The sequence spans 204 residues: Lysozyme G (204 aa).

The signal sequence occupies residues 1-19; that stretch reads MHLMLVLLGLAALLGTSQS. 2 cysteine pairs are disulfide-bonded: Cys23–Cys79 and Cys37–Cys48. Active-site residues include Glu92 and Asp105.

Belongs to the glycosyl hydrolase 23 family.

The protein localises to the secreted. It catalyses the reaction Hydrolysis of (1-&gt;4)-beta-linkages between N-acetylmuramic acid and N-acetyl-D-glucosamine residues in a peptidoglycan and between N-acetyl-D-glucosamine residues in chitodextrins.. Its function is as follows. Has bacteriolytic activity against M.luteus. In Dromaius novaehollandiae (Emu), this protein is Lysozyme G.